Here is a 133-residue protein sequence, read N- to C-terminus: Nickel-responsive regulator (133 aa).

Positions 76, 87, 89, and 95 each coordinate Ni(2+).

This sequence belongs to the transcriptional regulatory CopG/NikR family. Homotetramer. Ni(2+) is required as a cofactor.

Its function is as follows. Transcriptional repressor of the nikABCDE operon. Is active in the presence of excessive concentrations of intracellular nickel. This chain is Nickel-responsive regulator, found in Salmonella choleraesuis (strain SC-B67).